The sequence spans 621 residues: uncharacterized protein (621 aa).

It localises to the plastid. Its subcellular location is the chloroplast. This is an uncharacterized protein from Porphyra purpurea (Red seaweed).